Here is a 1257-residue protein sequence, read N- to C-terminus: Phosphatidylinositol 3,4,5-trisphosphate 5-phosphatase 2 (1257 aa).

In terms of domain architecture, SH2 spans 21–117; the sequence is WYHRDLSRAA…GLVCALLLPV (97 aa). Residues 119–132 show a composition bias toward basic and acidic residues; that stretch reads GEREPDPPDDRDAS. The disordered stretch occupies residues 119–181; sequence GEREPDPPDD…ESTPNGLSTV (63 aa). Serine 132 carries the post-translational modification Phosphoserine. Over residues 156–166 the composition is skewed to pro residues; sequence PSSPLPAPETP. Phosphothreonine is present on threonine 165. Residues serine 241 and serine 353 each carry the phosphoserine modification. Tyrosine 887 is subject to Phosphotyrosine. Serine 891 carries the post-translational modification Phosphoserine. A disordered region spans residues 897–986; sequence TGAKSKAPSV…PPKNSFNNPA (90 aa). Residues 939-951 show a composition bias toward pro residues; sequence PPPTGRPPAPPRA. The SH3-binding motif lies at 945-950; sequence PPAPPR. Residues 952–966 show a composition bias toward basic and acidic residues; the sequence is VPREESLNPRLKSEG. Positions 984–987 match the NPXY motif motif; that stretch reads NPAY. The residue at position 987 (tyrosine 987) is a Phosphotyrosine. A disordered region spans residues 1004-1115; sequence SFARAPIPPT…PASTFLEEVA (112 aa). 2 stretches are compositionally biased toward pro residues: residues 1049 to 1060 and 1088 to 1104; these read LPPPDFPPPPLP and GPPPPKAHPRPPLPPGT. A Phosphoserine modification is found at serine 1132. Residues tyrosine 1136 and tyrosine 1161 each carry the phosphotyrosine modification. One can recognise an SAM domain in the interval 1195 to 1257; sequence LGEAGMGAWL…LLLDTLQLSK (63 aa). Position 1256 is a phosphoserine (serine 1256).

It belongs to the inositol 1,4,5-trisphosphate 5-phosphatase family. Interacts with tyrosine phosphorylated form of SHC1. Interacts with EGFR. Upon stimulation by the EGF signaling pathway, it forms a complex with SHC1 and EGFR. Interacts with cytoskeletal protein SORBS3/vinexin, promoting its localization to the periphery of cells. Forms a complex with filamin (FLNA or FLNB), actin, GPIb (GP1BA or GP1BB) that regulates cortical and submembraneous actin. Interacts with c-Met/MET, when c-Met/MET is phosphorylated on 'Tyr-1356'. Interacts with p130Cas/BCAR1. Interacts with CENTD3/ARAP3 via its SAM domain. Interacts with c-Cbl/CBL and CAP/SORBS1. Interacts with activated EPHA2 receptor. Interacts with receptors FCGR2A. Interacts with FCGR2B. Interacts with tyrosine kinase ABL1. Interacts with tyrosine kinase TEC. Interacts with CSF1R. Interacts (via N-terminus) with SH3YL1 (via SH3 domain). Interacts (via SH2 domain) with tyrosine phosphorylated KLRC1 (via ITIM). Interacts with NEDD9/HEF1. Post-translationally, tyrosine phosphorylated by the members of the SRC family after exposure to a diverse array of extracellular stimuli such as insulin, growth factors such as EGF or PDGF, chemokines, integrin ligands and hypertonic and oxidative stress. May be phosphorylated upon IgG receptor FCGR2B-binding. Phosphorylated at Tyr-987 following cell attachment and spreading. Phosphorylated at Tyr-1161 following EGF signaling pathway stimulation.

The protein localises to the cytoplasm. The protein resides in the cytosol. It is found in the cytoskeleton. It localises to the membrane. Its subcellular location is the cell projection. The protein localises to the filopodium. The protein resides in the lamellipodium. It is found in the basal cell membrane. It localises to the nucleus. Its subcellular location is the nucleus speckle. The protein localises to the spindle pole. It carries out the reaction a 1,2-diacyl-sn-glycero-3-phospho-(1D-myo-inositol-3,4,5-trisphosphate) + H2O = a 1,2-diacyl-sn-glycero-3-phospho-(1D-myo-inositol-3,4-bisphosphate) + phosphate. The enzyme catalyses 1,2-dioctanoyl-sn-glycero-3-phospho-(1D-myo-inositol-3,4,5-trisphosphate) + H2O = 1,2-dioctanoyl-sn-glycero-3-phospho-(1D-myo-inositol-3,4-bisphosphate) + phosphate. It catalyses the reaction 1,2-dihexadecanoyl-sn-glycero-3-phospho-(1D-myo-inositol-3,4,5-trisphosphate) + H2O = 1,2-dihexadecanoyl-sn-glycero-3-phospho-(1D-myo-inositol-3,4-bisphosphate) + phosphate. With respect to regulation, activated upon translocation to the sites of synthesis of PtdIns(3,4,5)P3 in the membrane. Enzymatic activity is enhanced in the presence of phosphatidylserine. Phosphatidylinositol (PtdIns) phosphatase that specifically hydrolyzes the 5-phosphate of phosphatidylinositol-3,4,5-trisphosphate (PtdIns(3,4,5)P3) to produce PtdIns(3,4)P2, thereby negatively regulating the PI3K (phosphoinositide 3-kinase) pathways. Required for correct mitotic spindle orientation and therefore progression of mitosis. Plays a central role in regulation of PI3K-dependent insulin signaling, although the precise molecular mechanisms and signaling pathways remain unclear. While overexpression reduces both insulin-stimulated MAP kinase and Akt activation, its absence does not affect insulin signaling or GLUT4 trafficking. Confers resistance to dietary obesity. May act by regulating AKT2, but not AKT1, phosphorylation at the plasma membrane. Part of a signaling pathway that regulates actin cytoskeleton remodeling. Required for the maintenance and dynamic remodeling of actin structures as well as in endocytosis, having a major impact on ligand-induced EGFR internalization and degradation. Participates in regulation of cortical and submembraneous actin by hydrolyzing PtdIns(3,4,5)P3 thereby regulating membrane ruffling. Regulates cell adhesion and cell spreading. Required for HGF-mediated lamellipodium formation, cell scattering and spreading. Acts as a negative regulator of EPHA2 receptor endocytosis by inhibiting via PI3K-dependent Rac1 activation. Acts as a regulator of neuritogenesis by regulating PtdIns(3,4,5)P3 level and is required to form an initial protrusive pattern, and later, maintain proper neurite outgrowth. Acts as a negative regulator of the FC-gamma-RIIA receptor (FCGR2A). Mediates signaling from the FC-gamma-RIIB receptor (FCGR2B), playing a central role in terminating signal transduction from activating immune/hematopoietic cell receptor systems. Involved in EGF signaling pathway. Upon stimulation by EGF, it is recruited by EGFR and dephosphorylates PtdIns(3,4,5)P3. Plays a negative role in regulating the PI3K-PKB pathway, possibly by inhibiting PKB activity. Down-regulates Fc-gamma-R-mediated phagocytosis in macrophages independently of INPP5D/SHIP1. In macrophages, down-regulates NF-kappa-B-dependent gene transcription by regulating macrophage colony-stimulating factor (M-CSF)-induced signaling. Plays a role in the localization of AURKA and NEDD9/HEF1 to the basolateral membrane at interphase in polarized cysts, thereby mediates cell cycle homeostasis, cell polarization and cilia assembly. Additionally promotion of cilia growth is also facilitated by hydrolysis of (PtdIns(3,4,5)P3) to PtdIns(3,4)P2. Promotes formation of apical membrane-initiation sites during the initial stages of lumen formation via Rho family-induced actin filament organization and CTNNB1 localization to cell-cell contacts. May also hydrolyze PtdIns(1,3,4,5)P4, and could thus affect the levels of the higher inositol polyphosphates like InsP6. Involved in endochondral ossification. The protein is Phosphatidylinositol 3,4,5-trisphosphate 5-phosphatase 2 of Rattus norvegicus (Rat).